We begin with the raw amino-acid sequence, 202 residues long: Tetranectin (202 aa).

The N-terminal stretch at 1–21 is a signal peptide; that stretch reads MELWGAYLLLCLFSLLTQVTT. A glycan (O-linked (GalNAc...) threonine) is linked at Thr-25. 3 cysteine pairs are disulfide-bonded: Cys-71–Cys-81, Cys-98–Cys-197, and Cys-173–Cys-189. Residues 77-198 enclose the C-type lectin domain; the sequence is VHMKCFLAFT…CRDQLPYICQ (122 aa).

In terms of assembly, homotrimer. As to expression, found in plasma.

The protein localises to the secreted. Its function is as follows. Tetranectin binds to plasminogen and to isolated kringle 4. May be involved in the packaging of molecules destined for exocytosis. Plays a role in retinal function. This is Tetranectin (CLEC3B) from Homo sapiens (Human).